A 111-amino-acid chain; its full sequence is Parvalbumin alpha (111 aa).

Position 1 is an N-acetylthreonine; in form C2 (Thr1). EF-hand domains lie at 40 to 75 and 79 to 111; these read KPDDTLKEVFGILDQDKSGYIEEEELKFVLKGFAAG and LTANETKALLKAGDQDGDDKIGVDEFTNLVKAA. The Ca(2+) site is built by Asp53, Asp55, Ser57, Tyr59, Glu61, Glu64, Asp92, Asp94, Asp96, Lys98, and Glu103.

The protein belongs to the parvalbumin family. Post-translationally, acetylation of Thr-1 converts C1 to C2.

In muscle, parvalbumin is thought to be involved in relaxation after contraction. It binds two calcium ions. The sequence is that of Parvalbumin alpha from Latimeria chalumnae (Coelacanth).